Reading from the N-terminus, the 258-residue chain is Acyl-[acyl-carrier-protein]--UDP-N-acetylglucosamine O-acyltransferase (258 aa).

Belongs to the transferase hexapeptide repeat family. LpxA subfamily. Homotrimer.

Its subcellular location is the cytoplasm. It catalyses the reaction a (3R)-hydroxyacyl-[ACP] + UDP-N-acetyl-alpha-D-glucosamine = a UDP-3-O-[(3R)-3-hydroxyacyl]-N-acetyl-alpha-D-glucosamine + holo-[ACP]. It functions in the pathway glycolipid biosynthesis; lipid IV(A) biosynthesis; lipid IV(A) from (3R)-3-hydroxytetradecanoyl-[acyl-carrier-protein] and UDP-N-acetyl-alpha-D-glucosamine: step 1/6. Functionally, involved in the biosynthesis of lipid A, a phosphorylated glycolipid that anchors the lipopolysaccharide to the outer membrane of the cell. The polypeptide is Acyl-[acyl-carrier-protein]--UDP-N-acetylglucosamine O-acyltransferase (Myxococcus xanthus (strain DK1622)).